Here is a 781-residue protein sequence, read N- to C-terminus: Phenylalanine--tRNA ligase beta subunit (781 aa).

Residues 39–147 enclose the tRNA-binding domain; sequence APPFNDVVVA…DDAPVGEDLR (109 aa). The 76-residue stretch at 398–473 folds into the B5 domain; that stretch reads PRREPIELRL…RLFGYDRIPA (76 aa). Residues aspartate 451, aspartate 457, glutamate 460, and glutamate 461 each contribute to the Mg(2+) site. The FDX-ACB domain maps to 687–780; sequence SRFPQVRRDL…AARRCSATLR (94 aa).

Belongs to the phenylalanyl-tRNA synthetase beta subunit family. Type 1 subfamily. In terms of assembly, tetramer of two alpha and two beta subunits. Requires Mg(2+) as cofactor.

The protein localises to the cytoplasm. The catalysed reaction is tRNA(Phe) + L-phenylalanine + ATP = L-phenylalanyl-tRNA(Phe) + AMP + diphosphate + H(+). This chain is Phenylalanine--tRNA ligase beta subunit, found in Thiobacillus denitrificans (strain ATCC 25259 / T1).